Consider the following 988-residue polypeptide: Chitin synthase 1 (988 aa).

Residues 29 to 75 (QHHWPPSSGSSLGRAPSIPLSSSNPRSPIRPSTPSRVSTDWTRPPAP) are disordered. The segment covering 44–66 (PSIPLSSSNPRSPIRPSTPSRVS) has biased composition (low complexity). 7 helical membrane passes run 577 to 596 (WLNG…KQIW), 616 to 636 (FISL…FYFV), 656 to 676 (IFVI…ILSL), 732 to 752 (IFTN…LMSF), 764 to 784 (SAQY…YAFC), 864 to 884 (YVVA…SEAY), and 911 to 931 (AIGS…EGRI). The disordered stretch occupies residues 950 to 988 (AGLGSGFSESGKTGITSGSGMSGMSLSDVTSKISEKLAG). A compositionally biased stretch (low complexity) spans 957–976 (SESGKTGITSGSGMSGMSLS).

Belongs to the chitin synthase family. Class II subfamily.

The protein resides in the cell membrane. It catalyses the reaction [(1-&gt;4)-N-acetyl-beta-D-glucosaminyl](n) + UDP-N-acetyl-alpha-D-glucosamine = [(1-&gt;4)-N-acetyl-beta-D-glucosaminyl](n+1) + UDP + H(+). Functionally, polymerizes chitin, a structural polymer of the cell wall and septum, by transferring the sugar moiety of UDP-GlcNAc to the non-reducing end of the growing chitin polymer. CHS1 mainly responsible for normal yeast cell reproductive growth. The chain is Chitin synthase 1 from Exophiala dermatitidis (Black yeast-like fungus).